The chain runs to 658 residues: Glycogen debranching enzyme (658 aa).

Asp-336 serves as the catalytic Nucleophile. Catalysis depends on Glu-371, which acts as the Proton donor. A disordered region spans residues 459–484 (EANGEENRDGTNSNYSDNHGKEGLGG).

This sequence belongs to the glycosyl hydrolase 13 family.

The catalysed reaction is Hydrolysis of (1-&gt;6)-alpha-D-glucosidic linkages to branches with degrees of polymerization of three or four glucose residues in limit dextrin.. Its pathway is glycan degradation; glycogen degradation. Removes maltotriose and maltotetraose chains that are attached by 1,6-alpha-linkage to the limit dextrin main chain, generating a debranched limit dextrin. This is Glycogen debranching enzyme from Salmonella paratyphi A (strain ATCC 9150 / SARB42).